The primary structure comprises 51 residues: Sperm protamine P1 (51 aa).

The segment covering 1 to 13 (MARYRCCRSQSRS) has biased composition (low complexity). A disordered region spans residues 1–30 (MARYRCCRSQSRSRYYRQRQRSRRRRRRSC). Basic residues predominate over residues 14-30 (RYYRQRQRSRRRRRRSC). Cys-40 and Cys-48 form a disulfide bridge.

The protein belongs to the protamine P1 family. In terms of assembly, cross-linked by interchain disulfide bonds around the DNA-helix. Phosphorylated by SRPK1. In terms of tissue distribution, testis.

It is found in the nucleus. The protein localises to the chromosome. Functionally, protamines substitute for histones in the chromatin of sperm during the haploid phase of spermatogenesis. They compact sperm DNA into a highly condensed, stable and inactive complex. The polypeptide is Sperm protamine P1 (PRM1) (Homo sapiens (Human)).